A 95-amino-acid polypeptide reads, in one-letter code: Small ribosomal subunit protein uS19 (95 aa).

Belongs to the universal ribosomal protein uS19 family.

Its function is as follows. Protein S19 forms a complex with S13 that binds strongly to the 16S ribosomal RNA. The sequence is that of Small ribosomal subunit protein uS19 from Thermodesulfovibrio yellowstonii (strain ATCC 51303 / DSM 11347 / YP87).